A 138-amino-acid chain; its full sequence is MLIPRRVKHRKQHHPSRSGAAKGGTQVTFGDYGIQALEPAYITNRQIESARIAMTRHIKRGGKIWINIFPDRPLTKKPAETRMGSGKGSPEWWIANVKPGRVMFEMSYPNEEIAREALRRAMHKLPCKCRIVTREEQF.

Basic residues predominate over residues 1 to 16; sequence MLIPRRVKHRKQHHPS. Residues 1-25 form a disordered region; the sequence is MLIPRRVKHRKQHHPSRSGAAKGGT.

This sequence belongs to the universal ribosomal protein uL16 family. As to quaternary structure, part of the 50S ribosomal subunit.

In terms of biological role, binds 23S rRNA and is also seen to make contacts with the A and possibly P site tRNAs. This Rhodococcus jostii (strain RHA1) protein is Large ribosomal subunit protein uL16.